The primary structure comprises 300 residues: ATP synthase gamma chain (300 aa).

Belongs to the ATPase gamma chain family. As to quaternary structure, F-type ATPases have 2 components, CF(1) - the catalytic core - and CF(0) - the membrane proton channel. CF(1) has five subunits: alpha(3), beta(3), gamma(1), delta(1), epsilon(1). CF(0) has three main subunits: a, b and c.

Its subcellular location is the cell membrane. Produces ATP from ADP in the presence of a proton gradient across the membrane. The gamma chain is believed to be important in regulating ATPase activity and the flow of protons through the CF(0) complex. This chain is ATP synthase gamma chain, found in Enterococcus hirae (strain ATCC 9790 / DSM 20160 / JCM 8729 / LMG 6399 / NBRC 3181 / NCIMB 6459 / NCDO 1258 / NCTC 12367 / WDCM 00089 / R).